A 385-amino-acid polypeptide reads, in one-letter code: Glucans biosynthesis protein C (385 aa).

10 helical membrane-spanning segments follow: residues 17-37, 60-80, 91-111, 137-157, 173-193, 212-232, 239-259, 274-294, 311-331, and 338-358; these read AWLMLLGIPFHISLIYSSHTW, MQVFFVISGYFSYMLFLRYPL, VGIPMLTAIPLLTLPQFIMLQ, ISHLWFLLVLVVMTTLCVWIF, KFSMVKLSVIFLCLGIGYAVI, FIVMQTLFYLPFFILGALAFI, LFTTPSRGCTLAAALAFVAYL, TESVITMVLGLWMVNVVFSFG, ASLFIYLVHHPLTLFFGAYIT, and WLGFLCGLIFVVGIAIILYEI.

It belongs to the acyltransferase 3 family. OpgC subfamily.

The protein resides in the cell membrane. Its pathway is glycan metabolism; osmoregulated periplasmic glucan (OPG) biosynthesis. In terms of biological role, necessary for the succinyl substitution of periplasmic glucans. Could catalyze the transfer of succinyl residues from the cytoplasmic side of the membrane to the nascent glucan backbones on the periplasmic side of the membrane. The polypeptide is Glucans biosynthesis protein C (Escherichia coli (strain K12 / MC4100 / BW2952)).